The chain runs to 616 residues: Spastin (616 aa).

Positions 1 to 44 (MNSPGGRGKKKGSGGPSSPVPPRPPPPCLASSRPAPRPAPPPQS) are disordered. The segment at 1 to 50 (MNSPGGRGKKKGSGGPSSPVPPRPPPPCLASSRPAPRPAPPPQSPHKRNL) is required for nuclear localization. Over 1-56 (MNSPGGRGKKKGSGGPSSPVPPRPPPPCLASSRPAPRPAPPPQSPHKRNLYYFSYP) the chain is Cytoplasmic. The tract at residues 1–80 (MNSPGGRGKK…LGLLFVWLCQ (80 aa)) is required for interaction with ATL1. The required for midbody localization stretch occupies residues 1-194 (MNSPGGRGKK…LVMAKDRLQL (194 aa)). The interval 1-300 (MNSPGGRGKK…STPKTNRTNK (300 aa)) is required for interaction with RTN1. A Nuclear localization signal motif is present at residues 4–11 (PGGRGKKK). Composition is skewed to pro residues over residues 18 to 28 (SPVPPRPPPPC) and 35 to 44 (APRPAPPPQS). The interval 50–87 (LYYFSYPLFLGFALLRLVAFHLGLLFVWLCQRFSRALM) is required for interaction with SSNA1 and microtubules. Positions 57–77 (LFLGFALLRLVAFHLGLLFVW) form an intramembrane region, helical. Residues 59–67 (LGFALLRLV) carry the Nuclear export signal motif. Residues 78 to 616 (LCQRFSRALM…WNKDFGDTTV (539 aa)) are Cytoplasmic-facing. Residues 112–196 (EVERVRAFHK…MAKDRLQLLE (85 aa)) form a sufficient for interaction with CHMP1B region. The required for interaction with microtubules stretch occupies residues 114–200 (ERVRAFHKQA…RLQLLEKLQP (87 aa)). Positions 120–195 (HKQAFEYISV…VMAKDRLQLL (76 aa)) constitute an MIT domain. Residues 223–266 (GHLQSESGAVPKRKDPLTHPSNSLPRSKAIMKTGSTGLSGHHRA) are disordered. The sufficient for interaction with microtubules stretch occupies residues 226-328 (QSESGAVPKR…NVDSNLANFI (103 aa)). The interval 228 to 616 (ESGAVPKRKD…WNKDFGDTTV (389 aa)) is sufficient for microtubule severing. Phosphoserine is present on residues Ser245 and Ser268. The interval 270–328 (SGLSIVSGMRQGPGPTTATHKSTPKTNRTNKPSTPTTAPRKKKDLKNFRNVDSNLANFI) is required for interaction with microtubules and microtubule severing. The disordered stretch occupies residues 278–311 (MRQGPGPTTATHKSTPKTNRTNKPSTPTTAPRKK). The segment covering 283 to 306 (GPTTATHKSTPKTNRTNKPSTPTT) has biased composition (polar residues). Thr306 is subject to Phosphothreonine. A Nuclear localization signal motif is present at residues 309–312 (RKKK). A required for interaction with microtubules region spans residues 310–312 (KKK). 382–389 (GPPGNGKT) is a binding site for ATP. Ser597 is modified (phosphoserine).

This sequence belongs to the AAA ATPase family. Spastin subfamily. As to quaternary structure, homohexamer. Mostly monomeric, but assembles into hexameric structure for short periods of time. Oligomerization seems to be a prerequisite for catalytic activity. Binding to ATP in a cleft between two adjacent subunits stabilizes the homohexameric form. Binds to microtubules at least in part via the alpha-tubulin and beta-tubulin tails. The hexamer adopts a ring conformation through which microtubules pass prior to being severed. Does not interact strongly with tubulin heterodimers. Interacts (via MIT domain) with CHMP1B; the interaction is direct. Interacts with SSNA1. Interacts with ATL1. Interacts with RTN1. Interacts with ZFYVE27. Interacts with REEP1. Interacts (via MIT domain) with IST1.

Its subcellular location is the membrane. The protein localises to the endoplasmic reticulum. The protein resides in the midbody. It is found in the cytoplasm. It localises to the cytoskeleton. Its subcellular location is the microtubule organizing center. The protein localises to the centrosome. The protein resides in the perinuclear region. It is found in the nucleus. It localises to the spindle. Its subcellular location is the cell projection. The protein localises to the axon. The catalysed reaction is n ATP + n H2O + a microtubule = n ADP + n phosphate + (n+1) alpha/beta tubulin heterodimers.. Its activity is regulated as follows. Allosteric enzyme with a cooperative mechanism; at least two neighbor subunits influence each other strongly in spastin hexamers. Microtubule binding promotes cooperative interactions among spastin subunits. ATP-dependent microtubule severing protein that specifically recognizes and cuts microtubules that are polyglutamylated. Preferentially recognizes and acts on microtubules decorated with short polyglutamate tails: severing activity increases as the number of glutamates per tubulin rises from one to eight, but decreases beyond this glutamylation threshold. Severing activity is not dependent on tubulin acetylation or detyrosination. Microtubule severing promotes reorganization of cellular microtubule arrays and the release of microtubules from the centrosome following nucleation. It is critical for the biogenesis and maintenance of complex microtubule arrays in axons, spindles and cilia. SPAST is involved in abscission step of cytokinesis and nuclear envelope reassembly during anaphase in cooperation with the ESCRT-III complex. Recruited at the midbody, probably by IST1, and participates in membrane fission during abscission together with the ESCRT-III complex. Recruited to the nuclear membrane by IST1 and mediates microtubule severing, promoting nuclear envelope sealing and mitotic spindle disassembly during late anaphase. Required for membrane traffic from the endoplasmic reticulum (ER) to the Golgi and endosome recycling. Recruited by IST1 to endosomes and regulates early endosomal tubulation and recycling by mediating microtubule severing. Probably plays a role in axon growth and the formation of axonal branches. The sequence is that of Spastin from Sus scrofa (Pig).